The following is a 385-amino-acid chain: Probable di-N-acetylchitobiase 2 (385 aa).

The signal sequence occupies residues 1–15 (MRIILLLFLIVFVVA). In terms of domain architecture, GH18 spans 16-377 (QSSSSSSSSG…DALASFFPQS (362 aa)). Asn-51 and Asn-101 each carry an N-linked (GlcNAc...) asparagine glycan. Catalysis depends on Glu-129, which acts as the Proton donor. N-linked (GlcNAc...) asparagine glycosylation is found at Asn-223, Asn-272, and Asn-296.

The protein belongs to the glycosyl hydrolase 18 family.

The protein resides in the lysosome. Involved in the degradation of asparagine-linked glycoproteins. May hydrolyze of N-acetyl-beta-D-glucosamine (1-4)N-acetylglucosamine chitobiose core from the reducing end of the bond. This chain is Probable di-N-acetylchitobiase 2 (ctbs2), found in Dictyostelium discoideum (Social amoeba).